The primary structure comprises 360 residues: Phospho-N-acetylmuramoyl-pentapeptide-transferase (360 aa).

10 helical membrane-spanning segments follow: residues 26-46 (AIVS…RLIA), 72-92 (PTMG…LWAY), 94-114 (SNPY…VGFV), 132-152 (WKYF…YITG), 168-188 (VMPQ…VGTG), 199-219 (GLAI…AWAT), 236-256 (AGEL…FLWF), 263-283 (VFMG…IAVL), 288-308 (FLLV…ILQV), and 338-358 (VIVR…ATLK).

This sequence belongs to the glycosyltransferase 4 family. MraY subfamily. The cofactor is Mg(2+).

Its subcellular location is the cell inner membrane. The catalysed reaction is UDP-N-acetyl-alpha-D-muramoyl-L-alanyl-gamma-D-glutamyl-meso-2,6-diaminopimeloyl-D-alanyl-D-alanine + di-trans,octa-cis-undecaprenyl phosphate = di-trans,octa-cis-undecaprenyl diphospho-N-acetyl-alpha-D-muramoyl-L-alanyl-D-glutamyl-meso-2,6-diaminopimeloyl-D-alanyl-D-alanine + UMP. It functions in the pathway cell wall biogenesis; peptidoglycan biosynthesis. Functionally, catalyzes the initial step of the lipid cycle reactions in the biosynthesis of the cell wall peptidoglycan: transfers peptidoglycan precursor phospho-MurNAc-pentapeptide from UDP-MurNAc-pentapeptide onto the lipid carrier undecaprenyl phosphate, yielding undecaprenyl-pyrophosphoryl-MurNAc-pentapeptide, known as lipid I. This chain is Phospho-N-acetylmuramoyl-pentapeptide-transferase, found in Cronobacter sakazakii (strain ATCC BAA-894) (Enterobacter sakazakii).